The following is a 372-amino-acid chain: Fatty acid 2-hydroxylase (372 aa).

The Cytochrome b5 heme-binding domain maps to 8–86 (AASFSPSEVQ…LEQYYVGELR (79 aa)). The heme site is built by His-43 and His-69. A run of 2 helical transmembrane segments spans residues 168 to 188 (VWYSVPIIWVPLVLYLSWSYY) and 213 to 233 (SMFPGLFMLGTFLWSLIEYLI). One can recognise a Fatty acid hydroxylase domain in the interval 219 to 361 (FMLGTFLWSL…TKLWDYCFHT (143 aa)). Zn(2+) contacts are provided by His-234, His-239, His-257, His-260, and His-261. Transmembrane regions (helical) follow at residues 268 to 288 (SRLVFPPVPASLVIGVFYLCM) and 290 to 310 (LILPEAVGGTVFAGGLLGYVL). Zn(2+) contacts are provided by His-315, His-319, His-336, His-339, and His-340.

Belongs to the sterol desaturase family. SCS7 subfamily. Requires Zn(2+) as cofactor. Detected in differentiating cultured keratinocytes (at protein level). Detected in epidermis and cultured keratinocytes. Highly expressed in brain and colon. Detected at lower levels in testis, prostate, pancreas and kidney.

It localises to the endoplasmic reticulum membrane. The protein localises to the microsome membrane. It carries out the reaction a 1,2-saturated fatty acid + 2 Fe(II)-[cytochrome b5] + O2 + 2 H(+) = a (R)-2-hydroxy fatty acid + 2 Fe(III)-[cytochrome b5] + H2O. The enzyme catalyses hexadecanoate + 2 Fe(II)-[cytochrome b5] + O2 + 2 H(+) = (R)-2-hydroxyhexadecanoate + 2 Fe(III)-[cytochrome b5] + H2O. It catalyses the reaction octadecanoate + 2 Fe(II)-[cytochrome b5] + O2 + 2 H(+) = (R)-2-hydroxyoctadecanoate + 2 Fe(III)-[cytochrome b5] + H2O. The catalysed reaction is docosanoate + 2 Fe(II)-[cytochrome b5] + O2 + 2 H(+) = 2-hydroxydocosanoate + 2 Fe(III)-[cytochrome b5] + H2O. It carries out the reaction tetracosanoate + 2 Fe(II)-[cytochrome b5] + O2 + 2 H(+) = (R)-2-hydroxytetracosanoate + 2 Fe(III)-[cytochrome b5] + H2O. The protein operates within lipid metabolism; fatty acid metabolism. It functions in the pathway sphingolipid metabolism; galactosylceramide biosynthesis. In terms of biological role, catalyzes the hydroxylation of free fatty acids at the C-2 position to produce 2-hydroxy fatty acids, which are building blocks of sphingolipids and glycosphingolipids common in neural tissue and epidermis. FA2H is stereospecific for the production of (R)-2-hydroxy fatty acids. Plays an essential role in the synthesis of galactosphingolipids of the myelin sheath. Responsible for the synthesis of sphingolipids and glycosphingolipids involved in the formation of epidermal lamellar bodies critical for skin permeability barrier. Participates in the synthesis of glycosphingolipids and a fraction of type II wax diesters in sebaceous gland, specifically regulating hair follicle homeostasis. Involved in the synthesis of sphingolipids of plasma membrane rafts, controlling lipid raft mobility and trafficking of raft-associated proteins. In Homo sapiens (Human), this protein is Fatty acid 2-hydroxylase.